We begin with the raw amino-acid sequence, 692 residues long: Proprotein convertase subtilisin/kexin type 9 (692 aa).

The first 30 residues, 1 to 30 (MGTVSSRRSWWPLPLPLLLLLLLGPAGARA), serve as a signal peptide directing secretion. Residues 31 to 152 (QEDEDGDYEE…IEEDSSVFAQ (122 aa)) constitute a propeptide that is removed on maturation. Tyr-38 is modified (sulfotyrosine). The residue at position 47 (Ser-47) is a Phosphoserine. The Inhibitor I9 domain maps to 77 to 149 (TYVVVLKEET…VDYIEEDSSV (73 aa)). The 290-residue stretch at 155 to 444 (PWNLERITPA…VLTPNLVAAL (290 aa)) folds into the Peptidase S8 domain. Catalysis depends on charge relay system residues Asp-186 and His-226. Intrachain disulfides connect Cys-223-Cys-255 and Cys-323-Cys-358. Ser-386 (charge relay system) is an active-site residue. The tract at residues 450–692 (RAGWQLFCRT…HLVQASQELQ (243 aa)) is C-terminal domain. Intrachain disulfides connect Cys-457–Cys-527, Cys-477–Cys-526, and Cys-486–Cys-509. N-linked (GlcNAc...) asparagine glycosylation is present at Asn-533. Disulfide bonds link Cys-534-Cys-601, Cys-552-Cys-600, Cys-562-Cys-588, Cys-608-Cys-679, Cys-626-Cys-678, and Cys-635-Cys-654. Residue Ser-688 is modified to Phosphoserine.

Belongs to the peptidase S8 family. Monomer. Can self-associate to form dimers and higher multimers which may have increased LDLR degrading activity. The precursor protein but not the mature protein may form multimers. Interacts with APOB, VLDLR, LRP8/APOER2 and BACE1. The full-length immature form (pro-PCSK9) interacts with SCNN1A, SCNN1B and SCNN1G. The pro-PCSK9 form (via C-terminal domain) interacts with LDLR. Interacts (via the C-terminal domain) with ANXA2 (via repeat Annexin 1); the interaction inhibits the degradation of LDLR. Ca(2+) serves as cofactor. Cleavage by furin and PCSK5 generates a truncated inactive protein that is unable to induce LDLR degradation. In terms of processing, undergoes autocatalytic cleavage in the endoplasmic reticulum to release the propeptide from the N-terminus and the cleavage of the propeptide is strictly required for its maturation and activation. The cleaved propeptide however remains associated with the catalytic domain through non-covalent interactions, preventing potential substrates from accessing its active site. As a result, it is secreted from cells as a propeptide-containing, enzymatically inactive protein. Post-translationally, phosphorylation protects the propeptide against proteolysis.

Its subcellular location is the cytoplasm. The protein localises to the secreted. It localises to the endosome. It is found in the lysosome. The protein resides in the cell surface. Its subcellular location is the endoplasmic reticulum. The protein localises to the golgi apparatus. Its activity is regulated as follows. Its proteolytic activity is autoinhibited by the non-covalent binding of the propeptide to the catalytic domain. Inhibited by EGTA. In terms of biological role, crucial player in the regulation of plasma cholesterol homeostasis. Binds to low-density lipid receptor family members: low density lipoprotein receptor (LDLR), very low density lipoprotein receptor (VLDLR), apolipoprotein E receptor (LRP1/APOER) and apolipoprotein receptor 2 (LRP8/APOER2), and promotes their degradation in intracellular acidic compartments. Acts via a non-proteolytic mechanism to enhance the degradation of the hepatic LDLR through a clathrin LDLRAP1/ARH-mediated pathway. May prevent the recycling of LDLR from endosomes to the cell surface or direct it to lysosomes for degradation. Can induce ubiquitination of LDLR leading to its subsequent degradation. Inhibits intracellular degradation of APOB via the autophagosome/lysosome pathway in a LDLR-independent manner. Involved in the disposal of non-acetylated intermediates of BACE1 in the early secretory pathway. Inhibits epithelial Na(+) channel (ENaC)-mediated Na(+) absorption by reducing ENaC surface expression primarily by increasing its proteasomal degradation. Regulates neuronal apoptosis via modulation of LRP8/APOER2 levels and related anti-apoptotic signaling pathways. The chain is Proprotein convertase subtilisin/kexin type 9 (PCSK9) from Macaca nemestrina (Pig-tailed macaque).